Here is a 663-residue protein sequence, read N- to C-terminus: Translation factor GUF1, mitochondrial (663 aa).

A mitochondrion-targeting transit peptide spans 1 to 37 (MRGCLQSVRLLTTALGQSPRRPLPFAFRLPPNASRLF). A tr-type G domain is found at 65–245 (ERYRNFCIVA…TIVEQIPAPI (181 aa)). Residues 74 to 81 (AHVDHGKS), 138 to 142 (DTPGH), and 192 to 195 (NKVD) contribute to the GTP site.

This sequence belongs to the TRAFAC class translation factor GTPase superfamily. Classic translation factor GTPase family. LepA subfamily.

The protein resides in the mitochondrion inner membrane. The enzyme catalyses GTP + H2O = GDP + phosphate + H(+). Functionally, promotes mitochondrial protein synthesis. May act as a fidelity factor of the translation reaction, by catalyzing a one-codon backward translocation of tRNAs on improperly translocated ribosomes. Binds to mitochondrial ribosomes in a GTP-dependent manner. The chain is Translation factor GUF1, mitochondrial from Uncinocarpus reesii (strain UAMH 1704).